A 974-amino-acid polypeptide reads, in one-letter code: Kinase-interacting protein 1 (974 aa).

The NAB domain occupies 10 to 90 (YSWWAASHIR…ERYDHLSKEL (81 aa)). The disordered stretch occupies residues 151–170 (STASKQKQGKQSSKIEDAAK). Residues 173–423 (LSKNEAIEEI…DVVNQNSCLR (251 aa)) are a coiled coil. The disordered stretch occupies residues 586–614 (AQPTPAEKGDEKVSAQSGNTSVYETHTQK). Residues 599-610 (SAQSGNTSVYET) show a composition bias toward polar residues. Positions 641-697 (NEYTAILKNYKEVTKKLSDIEKKDRDTEFELTLQTRELKSAIAKRDEEIHNLRQKLS) form a coiled coil. The disordered stretch occupies residues 714-740 (LLDPSDPSSARGLKPEDLPQIKDGDDE). A compositionally biased stretch (basic and acidic residues) spans 726 to 736 (LKPEDLPQIKD). 2 coiled-coil regions span residues 784–807 (HQIQKFKTTVHDLQNEISKARDKE) and 882–905 (AAKFQGEVLNMKHENKKVREELEA).

Homodimer or homooligomer. Interacts with PRK1. Post-translationally, phosphorylated by PRK1. Expressed in mature pollen grains and pollen tubes, but not in style, ovary, petal, leaf, root or sepal.

It is found in the cytoplasm. Functionally, probably involved in the receptor-like kinase-mediated signal transduction pathway. The polypeptide is Kinase-interacting protein 1 (Petunia integrifolia (Violet-flowered petunia)).